An 837-amino-acid polypeptide reads, in one-letter code: MALEQAMQAARRGDLDVLRSLHAAGLLGPSLRDPLDALPVHHAARSGKLHCLRYLVEEVALPAVSRARNGATPAHDAAATGYLSCLQWLLTQGGCRVQEKDNSGATVLHLAARFGHPDVVNWLLYQGGANSAITTDTGALPIHYAAAKGDLPSMKLLVGHYPEGVNAQTNNGATPLYLACQEGHLEVTKYLVQECSADPHLRAQDGMTPLHAAAQMGHNPVLVWLVSFADVSFEQDHDGATAMHFAASRGHTKVLSWLLLHGAEISQDLWGGTPLHDAAENGELECCQILAVNGAGLDVRDHDGYTAADLADFNGHTHCSRYLRTVQTLSLEHRVLSRDPSMDLEAKQPDSGMSSPNTTMSVQPPNFDLGSPTSTLSNYDSCSSSHSSSKGQRSTRGARSSDLQSYMDMLNPEPRSKQGKPSSLPPPPPPSFPPPPPPGTQLPPPPPGYPAPNPPVGLHLDNIYMQTKNKLRHVEVDSLKKEPSSGDGYSGLRRQDSGLLRQDSELLLRHNTGLRRQDSDRKQRSFSKQPSTGDYYRQLGRSPGEPLAARPGMAHSEEAALLPGNHVHNGCSADSKASRELPPPPPPPPLPEALSSPPPAPPLPIEGAGAACGQRRSSSSTGSTKSFNMMSPTGDNSELLAEIKAGKSLKPTPQSKGLTTVFSGSGQPASQPESPQPAVSPGPSRARSPTPPASGPQPLLNGSIVPAPPATLAPGVHLDVEALIPTLDEQGRPIPEWKRQVMVRKLQQKMQEEEEQRRKEEEEEARLASLPAWRRDILRKKLEEEREQKRKEEERQKLEEIQRAKEQSEKLRTLGYDEAKLAPWQRQVILKKGEIPK.

ANK repeat units follow at residues 1–31 (MALE…GPSL), 35–66 (LDAL…AVSR), 69–99 (NGAT…RVQE), 103–132 (SGAT…ANSA), 137–167 (TGAL…GVNA), 171–201 (NGAT…DPHL), 205–235 (DGMT…SFEQ), 238–267 (DGAT…EISQ), and 270–299 (WGGT…GLDV). A phosphoserine mark is found at serine 337 and serine 341. The span at 339–348 (DPSMDLEAKQ) shows a compositional bias: basic and acidic residues. Disordered stretches follow at residues 339 to 459 (DPSM…VGLH), 477 to 712 (DSLK…PATL), 745 to 767 (KLQQ…EARL), and 785 to 816 (EREQ…TLGY). A compositionally biased stretch (polar residues) spans 351-364 (SGMSSPNTTMSVQP). The span at 376-395 (LSNYDSCSSSHSSSKGQRST) shows a compositional bias: low complexity. 2 positions are modified to phosphoserine: serine 400 and serine 401. A compositionally biased stretch (pro residues) spans 423-455 (SLPPPPPPSFPPPPPPGTQLPPPPPGYPAPNPP). Serine 497, serine 504, and serine 531 each carry phosphoserine. The span at 581 to 604 (LPPPPPPPPLPEALSSPPPAPPLP) shows a compositional bias: pro residues. The span at 617 to 626 (SSSSTGSTKS) shows a compositional bias: low complexity. 2 stretches are compositionally biased toward polar residues: residues 627 to 636 (FNMMSPTGDN) and 651 to 662 (PTPQSKGLTTVF). Serine 631 is subject to Phosphoserine. The WH2 domain maps to 635 to 652 (DNSELLAEIKAGKSLKPT). A compositionally biased stretch (low complexity) spans 663-673 (SGSGQPASQPE). A phosphoserine mark is found at serine 670, serine 674, and serine 680. A coiled-coil region spans residues 738-814 (KRQVMVRKLQ…KEQSEKLRTL (77 aa)).

As to quaternary structure, monomer. Interacts with PFN2. Binds F-actin in a Ca(2+)-resistant fashion. Interacts (via N-terminal) with BAIAP2 (via SH3-domain). Interacts with MYO3A (via C-terminus). Interacts with MYO3B (via C-terminus). As to expression, expressed at high concentration in the microvillar parallel actin bundle (PAB) of hair cells stereocilia in the cochlea and vestibular system. Detected also at high levels of a number of other sensory cell types, including taste receptor cells, solitary chemoreceptor cells, vomeronasal sensory neurons and Merkel cells. Isoform 1 is detected in testis. Isoforms 2 is detected in small intestine and kidney (at protein level). Isoforms 3, 4, 6 and 8 are expressed in Purkinje cells dendritic spines.

Its subcellular location is the cytoplasm. The protein resides in the cytoskeleton. It localises to the cell projection. The protein localises to the stereocilium. It is found in the microvillus. Its subcellular location is the cell junction. The protein resides in the dendritic spine. Functionally, multifunctional actin-bundling protein. Plays a major role in regulating the organization, dimension, dynamics and signaling capacities of the actin filament-rich microvilli in the mechanosensory and chemosensory cells. Required for the assembly and stabilization of the stereociliary parallel actin bundles. Plays a crucial role in the formation and maintenance of inner ear hair cell stereocilia. Involved in the elongation of actin in stereocilia. In extrastriolar hair cells, required for targeting MYO3B to stereocilia tips, and for regulation of stereocilia diameter and staircase formation. This chain is Espin (Espn), found in Rattus norvegicus (Rat).